The following is a 319-amino-acid chain: Cytochrome f (319 aa).

The first 35 residues, 1–35 (METRNIFSWIKEQITRSISVSLMIYIITRTAVSNA), serve as a signal peptide directing secretion. The heme site is built by Tyr-36, Cys-56, Cys-59, and His-60. The helical transmembrane segment at 285-305 (VQGLLFFLASVILAQIFLVLK) threads the bilayer.

It belongs to the cytochrome f family. The 4 large subunits of the cytochrome b6-f complex are cytochrome b6, subunit IV (17 kDa polypeptide, petD), cytochrome f and the Rieske protein, while the 4 small subunits are PetG, PetL, PetM and PetN. The complex functions as a dimer. The cofactor is heme.

It is found in the plastid. The protein localises to the chloroplast thylakoid membrane. Functionally, component of the cytochrome b6-f complex, which mediates electron transfer between photosystem II (PSII) and photosystem I (PSI), cyclic electron flow around PSI, and state transitions. The polypeptide is Cytochrome f (Coffea arabica (Arabian coffee)).